Reading from the N-terminus, the 295-residue chain is Acetylglutamate kinase (295 aa).

Substrate is bound by residues 66 to 67 (GG), R88, and N193.

The protein belongs to the acetylglutamate kinase family. ArgB subfamily.

The protein localises to the cytoplasm. The catalysed reaction is N-acetyl-L-glutamate + ATP = N-acetyl-L-glutamyl 5-phosphate + ADP. Its pathway is amino-acid biosynthesis; L-arginine biosynthesis; N(2)-acetyl-L-ornithine from L-glutamate: step 2/4. Its function is as follows. Catalyzes the ATP-dependent phosphorylation of N-acetyl-L-glutamate. This Gluconobacter oxydans (strain 621H) (Gluconobacter suboxydans) protein is Acetylglutamate kinase.